The following is a 1173-amino-acid chain: Inner capsid protein VP3 (1173 aa).

The interval 1-53 is disordered; the sequence is MSNLPKPASHFEPEKNVDDKGNVTGSAPPVSKDTPTQQASVSLPNQEEPTQQT. The span at 9–21 shows a compositional bias: basic and acidic residues; sequence SHFEPEKNVDDKG. Positions 33 to 53 are enriched in polar residues; sequence DTPTQQASVSLPNQEEPTQQT.

Belongs to the turreted BTV-fold inner capsid family. Homodecamer; each decamer is made up of two conformers of VP2, called VP2A and VP2B. 12 homodecamers assemble to form an icosahedral capsid.

Its subcellular location is the virion. Inner capsid protein that self-assembles to form an icosahedral capsid with a T=2 symmetry, which consists of 120 copies of VP2, with channels at each of its five-fold vertices. This capsid constitutes the innermost concentric layer of the viral mature particle. This Rice ragged stunt virus (isolate Thailand) (RRSV) protein is Inner capsid protein VP3.